The chain runs to 94 residues: Lipoate-protein ligase A subunit 2 (94 aa).

Heterodimer composed of LplA and LplB.

The enzyme catalyses L-lysyl-[lipoyl-carrier protein] + (R)-lipoate + ATP = N(6)-[(R)-lipoyl]-L-lysyl-[lipoyl-carrier protein] + AMP + diphosphate + H(+). It participates in protein modification; protein lipoylation via exogenous pathway; protein N(6)-(lipoyl)lysine from lipoate: step 1/2. Its pathway is protein modification; protein lipoylation via exogenous pathway; protein N(6)-(lipoyl)lysine from lipoate: step 2/2. In terms of biological role, part of a lipoate-protein ligase complex that catalyzes both the ATP-dependent activation of exogenously supplied lipoate to lipoyl-AMP and the transfer of the activated lipoyl onto the lipoyl domains of lipoate-dependent enzymes. Can also use octanoate as substrate. In Thermoplasma acidophilum (strain ATCC 25905 / DSM 1728 / JCM 9062 / NBRC 15155 / AMRC-C165), this protein is Lipoate-protein ligase A subunit 2 (lplB).